The sequence spans 103 residues: Histone H4 (103 aa).

Lysine 6 carries the post-translational modification N6-acetyl-N6-methyllysine; alternate. 3 positions are modified to N6-methyllysine; alternate: lysine 6, lysine 9, and lysine 13. The residue at position 13 (lysine 13) is an N6-acetyl-N6-methyllysine; alternate. The DNA-binding element occupies 17–21 (KRHRK). An N6-glutaryllysine modification is found at lysine 92.

It belongs to the histone H4 family. In terms of assembly, the nucleosome is a histone octamer containing two molecules each of H2A, H2B, H3 and H4 assembled in one H3-H4 heterotetramer and two H2A-H2B heterodimers. The octamer wraps approximately 147 bp of DNA. In terms of processing, glutarylation at Lys-92 (H4K91glu) destabilizes nucleosomes by promoting dissociation of the H2A-H2B dimers from nucleosomes.

Its subcellular location is the nucleus. The protein localises to the chromosome. In terms of biological role, core component of nucleosome. Nucleosomes wrap and compact DNA into chromatin, limiting DNA accessibility to the cellular machineries which require DNA as a template. Histones thereby play a central role in transcription regulation, DNA repair, DNA replication and chromosomal stability. DNA accessibility is regulated via a complex set of post-translational modifications of histones, also called histone code, and nucleosome remodeling. The protein is Histone H4 (H4.1) of Mortierella alpina (Oleaginous fungus).